Here is a 218-residue protein sequence, read N- to C-terminus: Large ribosomal subunit protein bL25 (218 aa).

Residues 187-218 form a disordered region; sequence SATAAVEEAKEDGAPEESAQGQGAAEAQETNK. Residues 202-218 show a composition bias toward low complexity; sequence EESAQGQGAAEAQETNK.

Belongs to the bacterial ribosomal protein bL25 family. CTC subfamily. In terms of assembly, part of the 50S ribosomal subunit; part of the 5S rRNA/L5/L18/L25 subcomplex. Contacts the 5S rRNA. Binds to the 5S rRNA independently of L5 and L18.

Its function is as follows. This is one of the proteins that binds to the 5S RNA in the ribosome where it forms part of the central protuberance. This is Large ribosomal subunit protein bL25 from Anaplasma marginale (strain St. Maries).